We begin with the raw amino-acid sequence, 703 residues long: tRNA 5-methylaminomethyl-2-thiouridine biosynthesis bifunctional protein MnmC (703 aa).

Residues 1 to 281 (MTAKPQKSCQ…KPAALVAKDH (281 aa)) form a tRNA (mnm(5)s(2)U34)-methyltransferase region. The segment at 286–703 (VGGGLASANL…LRKLLKGKAL (418 aa)) is FAD-dependent cmnm(5)s(2)U34 oxidoreductase.

The protein in the N-terminal section; belongs to the methyltransferase superfamily. tRNA (mnm(5)s(2)U34)-methyltransferase family. In the C-terminal section; belongs to the DAO family. It depends on FAD as a cofactor.

The protein resides in the cytoplasm. The catalysed reaction is 5-aminomethyl-2-thiouridine(34) in tRNA + S-adenosyl-L-methionine = 5-methylaminomethyl-2-thiouridine(34) in tRNA + S-adenosyl-L-homocysteine + H(+). Catalyzes the last two steps in the biosynthesis of 5-methylaminomethyl-2-thiouridine (mnm(5)s(2)U) at the wobble position (U34) in tRNA. Catalyzes the FAD-dependent demodification of cmnm(5)s(2)U34 to nm(5)s(2)U34, followed by the transfer of a methyl group from S-adenosyl-L-methionine to nm(5)s(2)U34, to form mnm(5)s(2)U34. The protein is tRNA 5-methylaminomethyl-2-thiouridine biosynthesis bifunctional protein MnmC of Shewanella sp. (strain MR-7).